The following is a 324-amino-acid chain: Succinylglutamate desuccinylase (324 aa).

H53, E56, and H148 together coordinate Zn(2+). Residue E211 is part of the active site.

This sequence belongs to the AspA/AstE family. Succinylglutamate desuccinylase subfamily. Zn(2+) is required as a cofactor.

The enzyme catalyses N-succinyl-L-glutamate + H2O = L-glutamate + succinate. It functions in the pathway amino-acid degradation; L-arginine degradation via AST pathway; L-glutamate and succinate from L-arginine: step 5/5. Its function is as follows. Transforms N(2)-succinylglutamate into succinate and glutamate. In Acinetobacter baumannii (strain SDF), this protein is Succinylglutamate desuccinylase.